A 104-amino-acid chain; its full sequence is uncharacterized protein (104 aa).

It is found in the mitochondrion. This is an uncharacterized protein from Claviceps purpurea (Ergot fungus).